A 683-amino-acid chain; its full sequence is Long-chain-fatty-acid--CoA ligase 5 (683 aa).

A helical; Signal-anchor for type III membrane protein membrane pass occupies residues 12–32 (LPTPALICLLTFGTAIFLWLI). The Cytoplasmic segment spans residues 33–683 (NRPQPVLPLI…IKSLYESIEE (651 aa)). Lys361 carries the N6-acetyllysine modification.

This sequence belongs to the ATP-dependent AMP-binding enzyme family.

Its subcellular location is the mitochondrion. It localises to the endoplasmic reticulum. The protein localises to the mitochondrion outer membrane. It is found in the endoplasmic reticulum membrane. The protein resides in the cell membrane. It carries out the reaction a long-chain fatty acid + ATP + CoA = a long-chain fatty acyl-CoA + AMP + diphosphate. It catalyses the reaction (5Z,8Z,11Z,14Z)-eicosatetraenoate + ATP + CoA = (5Z,8Z,11Z,14Z)-eicosatetraenoyl-CoA + AMP + diphosphate. The enzyme catalyses hexadecanoate + ATP + CoA = hexadecanoyl-CoA + AMP + diphosphate. The catalysed reaction is (E)-hexadec-2-enoate + ATP + CoA = (2E)-hexadecenoyl-CoA + AMP + diphosphate. It carries out the reaction 15-hydroxy-(5Z,8Z,11Z,13E)-eicosatetraenoate + ATP + CoA = 15-hydroxy-(5Z,8Z,11Z,13E)-eicosatetraenoyl-CoA + AMP + diphosphate. It catalyses the reaction 12-hydroxy-(5Z,8Z,10E,14Z)-eicosatetraenoate + ATP + CoA = 12-hydroxy-(5Z,8Z,10E,14Z)-eicosatetraenoyl-CoA + AMP + diphosphate. The enzyme catalyses 5-hydroxy-(6E,8Z,11Z,14Z)-eicosatetraenoate + ATP + CoA = 5-hydroxy-(6E,8Z,11Z,14Z)-eicosatetraenoyl-CoA + AMP + diphosphate. The catalysed reaction is 14,15-epoxy-(5Z,8Z,11Z)-eicosatrienoate + ATP + CoA = 14,15-epoxy-(5Z,8Z,11Z)-eicosatrienoyl-CoA + AMP + diphosphate. It carries out the reaction 11,12-epoxy-(5Z,8Z,14Z)-eicosatrienoate + ATP + CoA = 11,12-epoxy-(5Z,8Z,14Z)-eicosatrienoyl-CoA + AMP + diphosphate. It catalyses the reaction (9Z)-octadecenoate + ATP + CoA = (9Z)-octadecenoyl-CoA + AMP + diphosphate. In terms of biological role, catalyzes the conversion of long-chain fatty acids to their active form acyl-CoAs for both synthesis of cellular lipids, and degradation via beta-oxidation. ACSL5 may activate fatty acids from exogenous sources for the synthesis of triacylglycerol destined for intracellular storage. It was suggested that it may also stimulate fatty acid oxidation. At the villus tip of the crypt-villus axis of the small intestine may sensitize epithelial cells to apoptosis specifically triggered by the death ligand TRAIL. May have a role in the survival of glioma cells. Utilizes a wide range of saturated fatty acids with a preference for C16-C18 unsaturated fatty acids. In Mus musculus (Mouse), this protein is Long-chain-fatty-acid--CoA ligase 5.